The primary structure comprises 801 residues: MDRLVFSYCPSSKVTARFLVKFCFIEYQDSQEPCICTIQLFSGNESGSLMQKCFVSKIPNKSLLPTELSKISTHEWLDFGVTVSELSLNAKFVVSAWKPSFNDEEVYEFVGCTTYRLFDENNLLRQGLQKIPLQTSKEIKKYSPTSLELEQVKEINRLDGLLLKLQLGDVPSVNWLDDISFGKIKDFRSKHMSLVTIPILYLDFLQFSFPVVFQRSYYPKSENRVYYSSFDLELNLDSPAELKHRRLVRSQRNGPLDKDLKPNSKIRKELESILSYPPSEELSLEEKDLIWKFRFYLTRNKKAMTKFLKSVVWTDSSEVNQALSLLDSWTEIDIDDALELLSPSFVHPKVRAYAVSRLETASNEELLLYLLQLVQALRYDNPISSDERFQPSPLALFLVNRAISSPSIGNDLYWYLVVEIEDEPVSKLFSSVMFLFQKELSKSVEGRLIRETLSAQAKFVEKLLRISKSVQSFRGTRLKKIEYLKVLLEDHKYHLLDFHALPLPLDPSVNIVGIIPDACTVFKSTMQPLRLLFKCQDGSKYPIIFKNGDDLRQDQLVIQILTLMDKLLKKEKLDLHLKPYRILATGPTHGAVQFVPSKTLATILAEYHGSVLAYLRENNPDDGLNSANYGIDPVAMDNYVRSCAGYCVITYLLGVGDRHLDNLLITKDGHFFHADFGYILGRDPKLFSPAMKLSKEMVEGMGGYNSPFYQQFKSYCYTTFTALRKSSNLILNLFSLMVDANIPDIKFDKEKVVYKVKERFCLQMSESDAIKYFEQLINDSVSALFPQIIDRMHNLAQYMRS.

The 153-residue stretch at 14–166 folds into the C2 PI3K-type domain; that stretch reads VTARFLVKFC…RLDGLLLKLQ (153 aa). The 183-residue stretch at 257–439 folds into the PIK helical domain; that stretch reads DKDLKPNSKI…SSVMFLFQKE (183 aa). The 271-residue stretch at 515–785 folds into the PI3K/PI4K catalytic domain; the sequence is IPDACTVFKS…LINDSVSALF (271 aa). Residues 521–527 are G-loop; that stretch reads VFKSTMQ. The tract at residues 654 to 662 is catalytic loop; that stretch reads GVGDRHLDN. An activation loop region spans residues 673–694; sequence HADFGYILGRDPKLFSPAMKLS.

This sequence belongs to the PI3/PI4-kinase family. Component of the autophagy-specific vps34 PI3-kinase complex I composed of vps15, atg6, pik3/vps34, atg14 and atg38. Also a component of the VPS34 PI3-kinase complex II composed of atg6, pik3, vps15 and vps38.

It carries out the reaction a 1,2-diacyl-sn-glycero-3-phospho-(1D-myo-inositol) + ATP = a 1,2-diacyl-sn-glycero-3-phospho-(1D-myo-inositol-3-phosphate) + ADP + H(+). Its function is as follows. Phosphatidylinositol 3-kinase that functions as a part of the autophagy-specific VPS34 PI3-kinase complex I that plays a role in autophagosome assembly. This complex is essential to recruit the atg8-phosphatidylinositol conjugate and the atg12-atg5 conjugate to the pre-autophagosomal structure. Also functions as part of the VPS34 PI3-kinase complex II. This Schizosaccharomyces pombe (strain 972 / ATCC 24843) (Fission yeast) protein is Phosphatidylinositol 3-kinase pik3 (pik3).